The primary structure comprises 158 residues: Histone H2B.1 (158 aa).

N6-acetyllysine occurs at positions 7 and 25. Disordered stretches follow at residues 26–45 (AAAG…PKKG) and 135–158 (VHNF…GQQT). Residues 135 to 144 (VHNFESETSK) show a composition bias toward basic and acidic residues. The span at 147 to 158 (SQGRKRGRGQQT) shows a compositional bias: basic residues.

It belongs to the histone H2B family. In terms of assembly, the nucleosome is a histone octamer containing two molecules each of H2A, H2B, H3 and H4 assembled in one H3-H4 heterotetramer and two H2A-H2B heterodimers. The octamer wraps approximately 147 bp of DNA. Can be acetylated to form H2BK6ac and H2BK33ac. Expressed in the generative cell within the bicellular pollen. Not detected in other reproductive or vegetative tissues.

It localises to the nucleus. The protein resides in the chromosome. In terms of biological role, core component of nucleosome. Nucleosomes wrap and compact DNA into chromatin, limiting DNA accessibility to the cellular machineries which require DNA as a template. Histones thereby play a central role in transcription regulation, DNA repair, DNA replication and chromosomal stability. DNA accessibility is regulated via a complex set of post-translational modifications of histones, also called histone code, and nucleosome remodeling. The sequence is that of Histone H2B.1 from Lilium longiflorum (Trumpet lily).